The sequence spans 283 residues: Pantothenate synthetase (283 aa).

30–37 (MGNLHDGH) is a binding site for ATP. His37 acts as the Proton donor in catalysis. Gln61 contacts (R)-pantoate. Residue Gln61 participates in beta-alanine binding. Residue 149–152 (GEKD) participates in ATP binding. (R)-pantoate is bound at residue Gln155. 186–189 (LSSR) is a binding site for ATP.

This sequence belongs to the pantothenate synthetase family. In terms of assembly, homodimer.

It localises to the cytoplasm. The enzyme catalyses (R)-pantoate + beta-alanine + ATP = (R)-pantothenate + AMP + diphosphate + H(+). It participates in cofactor biosynthesis; (R)-pantothenate biosynthesis; (R)-pantothenate from (R)-pantoate and beta-alanine: step 1/1. Its function is as follows. Catalyzes the condensation of pantoate with beta-alanine in an ATP-dependent reaction via a pantoyl-adenylate intermediate. The sequence is that of Pantothenate synthetase from Escherichia coli O45:K1 (strain S88 / ExPEC).